We begin with the raw amino-acid sequence, 581 residues long: Polypeptide N-acetylgalactosaminyltransferase 12 (581 aa).

Topologically, residues 1–19 are cytoplasmic; the sequence is MWGRTARRRCPRELRRGRE. Residues 20 to 37 traverse the membrane as a helical; Signal-anchor for type II membrane protein segment; it reads ALLVLLALLALAGLGSVL. Over 38–581 the chain is Lumenal; that stretch reads RAQRGAGAGA…QKWFFKERML (544 aa). The interval 43 to 67 is disordered; it reads AGAGAAEPGPPRTPRPGRREPVMPR. Disulfide bonds link C125/C358, C349/C422, C458/C479, C506/C521, and C547/C566. The catalytic subdomain A stretch occupies residues 135-244; it reads LPRTSVIIAF…EGWLEPLLQR (110 aa). Residues D176 and R205 each contribute to the substrate site. Mn(2+)-binding residues include D228 and H230. The segment at 304-366 is catalytic subdomain B; sequence VIRSPTMAGG…PCSHVGHVFP (63 aa). W335 serves as a coordination point for substrate. H363 lines the Mn(2+) pocket. Y371 provides a ligand contact to substrate. The 133-residue stretch at 445-577 folds into the Ricin B-type lectin domain; it reads FFGMLQNKGL…NSDHQKWFFK (133 aa).

It belongs to the glycosyltransferase 2 family. GalNAc-T subfamily. The cofactor is Mn(2+). Widely expressed at different levels of expression. Highly expressed in digestive organs such as small intestine, stomach, pancreas and colon. Expressed at intermediate level in testis, thyroid gland and spleen. Weakly expressed in whole brain, cerebral cortex, cerebellum, fetal brain, bone marrow, thymus, leukocytes, heart, skeletal muscle, liver, lung, esophagus, kidney, adrenal gland, mammary gland, uterus, placenta, ovary and prostate.

It localises to the golgi apparatus membrane. It carries out the reaction L-seryl-[protein] + UDP-N-acetyl-alpha-D-galactosamine = a 3-O-[N-acetyl-alpha-D-galactosaminyl]-L-seryl-[protein] + UDP + H(+). It catalyses the reaction L-threonyl-[protein] + UDP-N-acetyl-alpha-D-galactosamine = a 3-O-[N-acetyl-alpha-D-galactosaminyl]-L-threonyl-[protein] + UDP + H(+). The protein operates within protein modification; protein glycosylation. Functionally, catalyzes the initial reaction in O-linked oligosaccharide biosynthesis, the transfer of an N-acetyl-D-galactosamine residue to a serine or threonine residue on the protein receptor. Has activity toward non-glycosylated peptides such as Muc5AC, Muc1a and EA2, and no detectable activity with Muc2 and Muc7. Displays enzymatic activity toward the Gal-NAc-Muc5AC glycopeptide, but no detectable activity to mono-GalNAc-glycosylated Muc1a, Muc2, Muc7 and EA2. May play an important role in the initial step of mucin-type oligosaccharide biosynthesis in digestive organs. This is Polypeptide N-acetylgalactosaminyltransferase 12 (GALNT12) from Homo sapiens (Human).